A 755-amino-acid polypeptide reads, in one-letter code: Catalase-peroxidase (755 aa).

Residues 93–241 (WHSAGTYRVF…LAAAHMGLIY (149 aa)) constitute a cross-link (tryptophyl-tyrosyl-methioninium (Trp-Tyr) (with M-267)). The active-site Proton acceptor is the H94. The tryptophyl-tyrosyl-methioninium (Tyr-Met) (with W-93) cross-link spans 241-267 (YVNPEGPDGNPDPVAAARDIRVTFGRM). Residue H282 participates in heme b binding.

The protein belongs to the peroxidase family. Peroxidase/catalase subfamily. As to quaternary structure, homodimer or homotetramer. Heme b serves as cofactor. In terms of processing, formation of the three residue Trp-Tyr-Met cross-link is important for the catalase, but not the peroxidase activity of the enzyme.

The protein localises to the cytoplasm. The enzyme catalyses H2O2 + AH2 = A + 2 H2O. It carries out the reaction 2 H2O2 = O2 + 2 H2O. Bifunctional enzyme with both catalase and broad-spectrum peroxidase activity. The sequence is that of Catalase-peroxidase from Podospora anserina (strain S / ATCC MYA-4624 / DSM 980 / FGSC 10383) (Pleurage anserina).